The primary structure comprises 306 residues: UDP-N-acetylenolpyruvoylglucosamine reductase (306 aa).

The 166-residue stretch at Lys34–Glu199 folds into the FAD-binding PCMH-type domain. The active site involves Arg179. Residues Arg215–Gln234 are disordered. The segment covering Pro220–Asn232 has biased composition (polar residues). Ser228 serves as the catalytic Proton donor. Residue Glu298 is part of the active site.

This sequence belongs to the MurB family. The cofactor is FAD.

Its subcellular location is the cytoplasm. It carries out the reaction UDP-N-acetyl-alpha-D-muramate + NADP(+) = UDP-N-acetyl-3-O-(1-carboxyvinyl)-alpha-D-glucosamine + NADPH + H(+). The protein operates within cell wall biogenesis; peptidoglycan biosynthesis. Its function is as follows. Cell wall formation. This Rhizorhabdus wittichii (strain DSM 6014 / CCUG 31198 / JCM 15750 / NBRC 105917 / EY 4224 / RW1) (Sphingomonas wittichii) protein is UDP-N-acetylenolpyruvoylglucosamine reductase.